The chain runs to 71 residues: General transcription factor IIH subunit 5 (71 aa).

T69 carries the phosphothreonine modification.

Belongs to the TFB5 family. Component of the 7-subunit TFIIH core complex composed of XPB/ERCC3, XPD/ERCC2, GTF2H1, GTF2H2, GTF2H3, GTF2H4 and GTF2H5, which is active in NER. The core complex associates with the 3-subunit CDK-activating kinase (CAK) module composed of CCNH/cyclin H, CDK7 and MNAT1 to form the 10-subunit holoenzyme (holo-TFIIH) active in transcription. Part of TBP-based Pol II pre-initiation complex (PIC), in which Pol II core assembles with general transcription factors and other specific initiation factors including GTF2E1, GTF2E2, GTF2F1, GTF2F2, TCEA1, ERCC2, ERCC3, GTF2H2, GTF2H3, GTF2H4, GTF2H5, GTF2A1, GTF2A2, GTF2B and TBP; this large multi-subunit PIC complex mediates DNA unwinding and targets Pol II core to the transcription start site where the first phosphodiester bond forms.

Its subcellular location is the nucleus. The protein localises to the cytoplasm. In terms of biological role, component of the general transcription and DNA repair factor IIH (TFIIH) core complex, which is involved in general and transcription-coupled nucleotide excision repair (NER) of damaged DNA and, when complexed to CAK, in RNA transcription by RNA polymerase II. In NER, TFIIH acts by opening DNA around the lesion to allow the excision of the damaged oligonucleotide and its replacement by a new DNA fragment. In transcription, TFIIH has an essential role in transcription initiation. When the pre-initiation complex (PIC) has been established, TFIIH is required for promoter opening and promoter escape. Phosphorylation of the C-terminal tail (CTD) of the largest subunit of RNA polymerase II by the kinase module CAK controls the initiation of transcription. Necessary for the stability of the TFIIH complex and for the presence of normal levels of TFIIH in the cell. In Mus musculus (Mouse), this protein is General transcription factor IIH subunit 5.